The primary structure comprises 614 residues: Acid phosphatase (614 aa).

The N-terminal stretch at 1-22 is a signal peptide; sequence MKGTAASALLVALSATAAQARP. One can recognise a Fibronectin type-III domain in the interval 80–176; the sequence is IPKGMHIHYQ…EVLSFKTSRP (97 aa). N-linked (GlcNAc...) asparagine glycans are attached at residues asparagine 110, asparagine 161, asparagine 242, asparagine 295, asparagine 333, asparagine 340, asparagine 352, asparagine 408, asparagine 429, asparagine 512, asparagine 523, asparagine 559, and asparagine 578. Positions 606-614 are excised as a propeptide; it reads VAGGKKLHS.

As to quaternary structure, monomer. Requires Cu cation as cofactor. In terms of processing, glycosylated; probably with N-linked high-mannose oligosaccharides.

It is found in the secreted. The catalysed reaction is a phosphate monoester + H2O = an alcohol + phosphate. Competitively inhibited by phosphomycin and inorganic orthophosphate. The polypeptide is Acid phosphatase (aphA) (Aspergillus ficuum).